A 313-amino-acid polypeptide reads, in one-letter code: D-alanine--D-alanine ligase (313 aa).

Residues Lys108–Ala308 form the ATP-grasp domain. Val138–Tyr193 serves as a coordination point for ATP. Mg(2+) is bound by residues Asp262, Glu275, and Asn277.

This sequence belongs to the D-alanine--D-alanine ligase family. Mg(2+) is required as a cofactor. It depends on Mn(2+) as a cofactor.

The protein resides in the cytoplasm. It catalyses the reaction 2 D-alanine + ATP = D-alanyl-D-alanine + ADP + phosphate + H(+). Its pathway is cell wall biogenesis; peptidoglycan biosynthesis. Its function is as follows. Cell wall formation. The polypeptide is D-alanine--D-alanine ligase (Burkholderia ambifaria (strain ATCC BAA-244 / DSM 16087 / CCUG 44356 / LMG 19182 / AMMD) (Burkholderia cepacia (strain AMMD))).